The following is a 334-amino-acid chain: Biotin synthase (334 aa).

Residues 55 to 285 form the Radical SAM core domain; sequence GEGGGVHACS…AHPSKIIKFA (231 aa). The [4Fe-4S] cluster site is built by Cys-73, Cys-77, and Cys-80. The [2Fe-2S] cluster site is built by Cys-152, Cys-213, and Lys-283.

Belongs to the radical SAM superfamily. Biotin synthase family. In terms of assembly, homodimer. [4Fe-4S] cluster serves as cofactor. It depends on [2Fe-2S] cluster as a cofactor.

The catalysed reaction is (4R,5S)-dethiobiotin + (sulfur carrier)-SH + 2 reduced [2Fe-2S]-[ferredoxin] + 2 S-adenosyl-L-methionine = (sulfur carrier)-H + biotin + 2 5'-deoxyadenosine + 2 L-methionine + 2 oxidized [2Fe-2S]-[ferredoxin]. It participates in cofactor biosynthesis; biotin biosynthesis; biotin from 7,8-diaminononanoate: step 2/2. In terms of biological role, catalyzes the conversion of dethiobiotin (DTB) to biotin by the insertion of a sulfur atom into dethiobiotin via a radical-based mechanism. The sequence is that of Biotin synthase from Chlorobaculum parvum (strain DSM 263 / NCIMB 8327) (Chlorobium vibrioforme subsp. thiosulfatophilum).